Here is a 181-residue protein sequence, read N- to C-terminus: Regulator of G-protein signaling 10 (181 aa).

A disordered region spans residues 1 to 35 (MFTRAVSRLSRKRPPSDIHDGDGSSSSGHQSLKST). Phosphoserine occurs at positions 24 and 41. Residues 41–156 (SLENLLEDPE…LKSDLFLKHR (116 aa)) form the RGS domain. C74 carries S-palmitoyl cysteine lipidation. Residues 157–181 (RTEEEEEDPPDAQTAAKRASRIYNT) form a disordered region. Phosphoserine is present on S176.

As to quaternary structure, interacts with GNAZ, GNAI1 and GNAI3. Associates specifically with the activated, GTP-bound forms of GNAZ and GNAI3.

The protein resides in the cytoplasm. The protein localises to the cytosol. It localises to the nucleus. In terms of biological role, regulates G protein-coupled receptor signaling cascades, including signaling downstream of the muscarinic acetylcholine receptor CHRM2. Inhibits signal transduction by increasing the GTPase activity of G protein alpha subunits, thereby driving them into their inactive GDP-bound form. Modulates the activity of potassium channels that are activated in response to CHRM2 signaling. Activity on GNAZ is inhibited by palmitoylation of the G-protein. The polypeptide is Regulator of G-protein signaling 10 (Rgs10) (Rattus norvegicus (Rat)).